The chain runs to 264 residues: tRNA (guanine-N(1)-)-methyltransferase (264 aa).

S-adenosyl-L-methionine-binding positions include glycine 125 and 145 to 150 (LGDFVL).

It belongs to the RNA methyltransferase TrmD family. Homodimer.

Its subcellular location is the cytoplasm. It catalyses the reaction guanosine(37) in tRNA + S-adenosyl-L-methionine = N(1)-methylguanosine(37) in tRNA + S-adenosyl-L-homocysteine + H(+). In terms of biological role, specifically methylates guanosine-37 in various tRNAs. This is tRNA (guanine-N(1)-)-methyltransferase from Burkholderia ambifaria (strain ATCC BAA-244 / DSM 16087 / CCUG 44356 / LMG 19182 / AMMD) (Burkholderia cepacia (strain AMMD)).